A 519-amino-acid polypeptide reads, in one-letter code: Putative thymidine phosphorylase (519 aa).

It belongs to the thymidine/pyrimidine-nucleoside phosphorylase family. Type 2 subfamily.

It carries out the reaction thymidine + phosphate = 2-deoxy-alpha-D-ribose 1-phosphate + thymine. The protein is Putative thymidine phosphorylase of Maricaulis maris (strain MCS10) (Caulobacter maris).